A 303-amino-acid polypeptide reads, in one-letter code: Probable cell division protein WhiA (303 aa).

Residues 272–303 (SLQQIADSLDFAITKSGVNHRLRKINKLAEDL) constitute a DNA-binding region (H-T-H motif).

It belongs to the WhiA family.

Functionally, involved in cell division and chromosome segregation. This is Probable cell division protein WhiA from Streptococcus equi subsp. zooepidemicus (strain MGCS10565).